The chain runs to 199 residues: Casparian strip membrane protein 1 (199 aa).

At 1–37 (MKSESAAIDIPESSSVAKGKAPLIAVSRNEKGGYRKG) the chain is on the cytoplasmic side. A helical transmembrane segment spans residues 38–58 (IAIFDFILRLAAIATALAAAA). Over 59–87 (AMGTSDETLPFFTQFFQFQASYDDLPTFQ) the chain is Extracellular. The helical transmembrane segment at 88 to 108 (FFVIAIAIVGGYLVLSLPFSI) threads the bilayer. Residues 109-120 (VAIVRPHAVGPR) lie on the Cytoplasmic side of the membrane. The chain crosses the membrane as a helical span at residues 121–141 (LLLIILDAVALTLNTAAGAAA). The Extracellular portion of the chain corresponds to 142-173 (AAIVYLAHNGNSNTNWLAICQQYGDFCQKVSG). Residues 174-194 (AVVASFITVVIFVFLIVLSAF) form a helical membrane-spanning segment. The Cytoplasmic portion of the chain corresponds to 195–199 (ALRRH).

Belongs to the Casparian strip membrane proteins (CASP) family. In terms of assembly, homodimer and heterodimers.

Its subcellular location is the cell membrane. Its function is as follows. Regulates membrane-cell wall junctions and localized cell wall deposition. Required for establishment of the Casparian strip membrane domain (CSD) and the subsequent formation of Casparian strips, a cell wall modification of the root endodermis that determines an apoplastic barrier between the intraorganismal apoplasm and the extraorganismal apoplasm and prevents lateral diffusion. This is Casparian strip membrane protein 1 from Populus trichocarpa (Western balsam poplar).